The following is a 164-amino-acid chain: Transcription elongation factor GreA (164 aa).

Belongs to the GreA/GreB family.

Functionally, necessary for efficient RNA polymerase transcription elongation past template-encoded arresting sites. The arresting sites in DNA have the property of trapping a certain fraction of elongating RNA polymerases that pass through, resulting in locked ternary complexes. Cleavage of the nascent transcript by cleavage factors such as GreA or GreB allows the resumption of elongation from the new 3'terminus. GreA releases sequences of 2 to 3 nucleotides. The chain is Transcription elongation factor GreA from Helicobacter acinonychis (strain Sheeba).